Here is a 317-residue protein sequence, read N- to C-terminus: Insulin-like growth factor-binding protein 2 (317 aa).

An N-terminal signal peptide occupies residues 1–33 (MQPRLGGPALLLLPPLLLLLLLGAGGGDCGARA). One can recognise an IGFBP N-terminal domain in the interval 35-126 (VLFRCPPCTP…VHGEGTCEKH (92 aa)). Intrachain disulfides connect cysteine 39–cysteine 76, cysteine 42–cysteine 78, cysteine 50–cysteine 79, cysteine 68–cysteine 82, cysteine 90–cysteine 103, and cysteine 97–cysteine 123. Disordered stretches follow at residues 125-151 (KHGD…GGQV) and 189-218 (EQHR…ARTP). The 83-residue stretch at 216–298 (RTPCQQELDQ…APTIRGDPEC (83 aa)) folds into the Thyroglobulin type-1 domain. Intrachain disulfides connect cysteine 219-cysteine 253, cysteine 264-cysteine 275, and cysteine 277-cysteine 298. The Cell attachment site motif lies at 293–295 (RGD).

As to quaternary structure, interacts with IGF1. Interacts with IGF2. Interacts (via RGD motif) with integrin alpha5/ITGA5; this interaction induces cell migration, adhesion or apoptosis according to the context. Interacts with PTPRB; this interaction leads to PTPRB dimerization and inactivation. In terms of processing, cleaved by MMP9 leading to release of free IGF2 from IGFBP2-IGF2 complex, which contributes to enhance the motility and the growth of astrocytes. Post-translationally, O-glycosylated. In terms of tissue distribution, expressed in abundance in selected adult tissues, namely liver, kidney, adrenal, pituitary and choroid plexus.

Its subcellular location is the secreted. Functionally, multifunctional protein that plays a critical role in regulating the availability of IGFs such as IGF1 and IGF2 to their receptors and thereby regulates IGF-mediated cellular processes including proliferation, differentiation, and apoptosis in a cell-type specific manner. Functions coordinately with receptor protein tyrosine phosphatase beta/PTPRB and the IGF1 receptor to regulate IGF1-mediated signaling by stimulating the phosphorylation of PTEN leading to its inactivation and AKT1 activation. Plays a positive role in cell migration via interaction with integrin alpha5/ITGA5 through an RGD motif. Additionally, interaction with ITGA5/ITGB1 enhances the adhesion of endothelial progenitor cells to endothelial cells. Upon mitochondrial damage, facilitates apoptosis with ITGA5 of podocytes, and then activates the phosphorylation of focal adhesion kinase (FAK)-mediated mitochondrial injury. This Ovis aries (Sheep) protein is Insulin-like growth factor-binding protein 2 (IGFBP2).